Consider the following 842-residue polypeptide: Leucine--tRNA ligase (842 aa).

Positions 44-55 (PYPSANGLHVGH) match the 'HIGH' region motif. Positions 619-623 (KMSKS) match the 'KMSKS' region motif. Lysine 622 lines the ATP pocket.

This sequence belongs to the class-I aminoacyl-tRNA synthetase family.

The protein localises to the cytoplasm. The enzyme catalyses tRNA(Leu) + L-leucine + ATP = L-leucyl-tRNA(Leu) + AMP + diphosphate. This is Leucine--tRNA ligase from Borrelia hermsii (strain HS1 / DAH).